The sequence spans 513 residues: ATP synthase subunit alpha (513 aa).

Residue 169–176 (GDRQTGKT) coordinates ATP.

Belongs to the ATPase alpha/beta chains family. As to quaternary structure, F-type ATPases have 2 components, CF(1) - the catalytic core - and CF(0) - the membrane proton channel. CF(1) has five subunits: alpha(3), beta(3), gamma(1), delta(1), epsilon(1). CF(0) has three main subunits: a(1), b(2) and c(9-12). The alpha and beta chains form an alternating ring which encloses part of the gamma chain. CF(1) is attached to CF(0) by a central stalk formed by the gamma and epsilon chains, while a peripheral stalk is formed by the delta and b chains.

It is found in the cell inner membrane. It catalyses the reaction ATP + H2O + 4 H(+)(in) = ADP + phosphate + 5 H(+)(out). In terms of biological role, produces ATP from ADP in the presence of a proton gradient across the membrane. The alpha chain is a regulatory subunit. The protein is ATP synthase subunit alpha of Shewanella putrefaciens (strain CN-32 / ATCC BAA-453).